Here is a 435-residue protein sequence, read N- to C-terminus: Cytochrome c biogenesis protein CcsB (435 aa).

3 helical membrane passes run 14-34 (LRLAILLLLLIAGASALGTIL), 72-92 (SVWFLSLLAWLGLALILCSWR), and 162-182 (VGPLLVHTGLVLLLIGAAWGA).

Belongs to the Ccs1/CcsB family. In terms of assembly, may interact with CcsA.

The protein resides in the cellular thylakoid membrane. Required during biogenesis of c-type cytochromes (cytochrome c6 and cytochrome f) at the step of heme attachment. This chain is Cytochrome c biogenesis protein CcsB, found in Synechococcus sp. (strain CC9311).